The following is a 385-amino-acid chain: Probable caffeine synthase 3 (385 aa).

S-adenosyl-L-homocysteine-binding residues include Y18, C62, N67, D101, L102, S140, and F141. The caffeine site is built by Y158, Q161, and F162. Residue N179 participates in Mg(2+) binding. T238 is a caffeine binding site. The Mg(2+) site is built by D261, F263, and N264. Y369 is a caffeine binding site.

The protein belongs to the methyltransferase superfamily. Type-7 methyltransferase family. The cofactor is Mg(2+). As to expression, expressed in roots, stems, young and old leaves.

Its pathway is alkaloid biosynthesis. Functionally, may be involved in the biosynthesis of caffeine. The polypeptide is Probable caffeine synthase 3 (Coffea arabica (Arabian coffee)).